The following is a 333-amino-acid chain: Lipoyl synthase (333 aa).

Polar residues predominate over residues 1–15 (MSTLVESPVPSNDSQ). The disordered stretch occupies residues 1 to 34 (MSTLVESPVPSNDSQAAAPAAYDPTQKQKSQAKT). [4Fe-4S] cluster contacts are provided by cysteine 80, cysteine 85, cysteine 91, cysteine 106, cysteine 110, cysteine 113, and serine 320. The Radical SAM core domain occupies 91-309 (CFGKGTATFM…EREAYAMGFT (219 aa)).

Belongs to the radical SAM superfamily. Lipoyl synthase family. [4Fe-4S] cluster serves as cofactor.

The protein localises to the cytoplasm. The catalysed reaction is [[Fe-S] cluster scaffold protein carrying a second [4Fe-4S](2+) cluster] + N(6)-octanoyl-L-lysyl-[protein] + 2 oxidized [2Fe-2S]-[ferredoxin] + 2 S-adenosyl-L-methionine + 4 H(+) = [[Fe-S] cluster scaffold protein] + N(6)-[(R)-dihydrolipoyl]-L-lysyl-[protein] + 4 Fe(3+) + 2 hydrogen sulfide + 2 5'-deoxyadenosine + 2 L-methionine + 2 reduced [2Fe-2S]-[ferredoxin]. The protein operates within protein modification; protein lipoylation via endogenous pathway; protein N(6)-(lipoyl)lysine from octanoyl-[acyl-carrier-protein]: step 2/2. Its function is as follows. Catalyzes the radical-mediated insertion of two sulfur atoms into the C-6 and C-8 positions of the octanoyl moiety bound to the lipoyl domains of lipoate-dependent enzymes, thereby converting the octanoylated domains into lipoylated derivatives. The protein is Lipoyl synthase of Bordetella bronchiseptica (strain ATCC BAA-588 / NCTC 13252 / RB50) (Alcaligenes bronchisepticus).